A 402-amino-acid polypeptide reads, in one-letter code: Putative F-box protein At3g23960 (402 aa).

The disordered stretch occupies residues methionine 1–serine 23. In terms of domain architecture, F-box spans serine 26–threonine 73.

This chain is Putative F-box protein At3g23960, found in Arabidopsis thaliana (Mouse-ear cress).